Reading from the N-terminus, the 152-residue chain is uncharacterized protein (152 aa).

This is an uncharacterized protein from Acheta domesticus (House cricket).